A 363-amino-acid chain; its full sequence is Caffeic acid 3-O-methyltransferase (363 aa).

130–136 (MNQDKVL) contacts substrate. Residues 162-180 (AFEYHGKDPRFNKVFNQGM) form a substrate binding region. S-adenosyl-L-methionine contacts are provided by Gly-208, Asp-231, Asp-251, Met-252, and Lys-265. Residue His-269 is the Proton acceptor of the active site.

The protein belongs to the class I-like SAM-binding methyltransferase superfamily. Cation-independent O-methyltransferase family. COMT subfamily. In terms of assembly, homodimer.

The catalysed reaction is (E)-caffeate + S-adenosyl-L-methionine = (E)-ferulate + S-adenosyl-L-homocysteine + H(+). The protein operates within aromatic compound metabolism; phenylpropanoid biosynthesis. Functionally, catalyzes the conversion of caffeic acid to ferulic acid and of 5-hydroxyferulic acid to sinapic acid. The resulting products may subsequently be converted to the corresponding alcohols that are incorporated into lignins. The polypeptide is Caffeic acid 3-O-methyltransferase (COMT1) (Catharanthus roseus (Madagascar periwinkle)).